Here is a 146-residue protein sequence, read N- to C-terminus: Anti-sigma F factor (146 aa).

Belongs to the anti-sigma-factor family.

It carries out the reaction L-seryl-[protein] + ATP = O-phospho-L-seryl-[protein] + ADP + H(+). The catalysed reaction is L-threonyl-[protein] + ATP = O-phospho-L-threonyl-[protein] + ADP + H(+). In terms of biological role, binds to sigma F and blocks its ability to form an RNA polymerase holoenzyme (E-sigma F). Phosphorylates SpoIIAA on a serine residue. This phosphorylation may enable SpoIIAA to act as an anti-anti-sigma factor that counteracts SpoIIAB and thus releases sigma F from inhibition. This Bacillus subtilis (strain 168) protein is Anti-sigma F factor (spoIIAB).